The following is a 347-amino-acid chain: Heat-inducible transcription repressor HrcA (347 aa).

This sequence belongs to the HrcA family.

Functionally, negative regulator of class I heat shock genes (grpE-dnaK-dnaJ and groELS operons). Prevents heat-shock induction of these operons. The sequence is that of Heat-inducible transcription repressor HrcA from Sorangium cellulosum (strain So ce56) (Polyangium cellulosum (strain So ce56)).